The primary structure comprises 168 residues: MHRRAIYPGTFDPVTNGHADLIERAARLFKHVIIGIASNPSKQPRFSLEERVAQVNLVTAHLKNVEVVGFTGLLVDFAKEQHASVLIRGLRAVSDFEYEFQLANMNRRLSPDLESVFLTPAEENSFISSTLVKEVALHGGDVSQFVHPQIAAALKLKVAQIQLDKEGK.

T10 lines the substrate pocket. ATP is bound by residues T10–F11 and H18. Residues K42, L74, and R88 each coordinate substrate. ATP contacts are provided by residues G89–R91, E99, and N124–T130.

This sequence belongs to the bacterial CoaD family. As to quaternary structure, homohexamer. Mg(2+) is required as a cofactor.

The protein resides in the cytoplasm. It catalyses the reaction (R)-4'-phosphopantetheine + ATP + H(+) = 3'-dephospho-CoA + diphosphate. Its pathway is cofactor biosynthesis; coenzyme A biosynthesis; CoA from (R)-pantothenate: step 4/5. Its function is as follows. Reversibly transfers an adenylyl group from ATP to 4'-phosphopantetheine, yielding dephospho-CoA (dPCoA) and pyrophosphate. The chain is Phosphopantetheine adenylyltransferase from Shewanella frigidimarina (strain NCIMB 400).